The chain runs to 83 residues: ATP synthase subunit c 2 (83 aa).

The next 2 membrane-spanning stretches (helical) occupy residues I8–G28 and L58–A78.

The protein belongs to the ATPase C chain family. F-type ATPases have 2 components, F(1) - the catalytic core - and F(0) - the membrane proton channel. F(1) has five subunits: alpha(3), beta(3), gamma(1), delta(1), epsilon(1). F(0) has four main subunits: a(1), b(1), b'(1) and c(10-14). The alpha and beta chains form an alternating ring which encloses part of the gamma chain. F(1) is attached to F(0) by a central stalk formed by the gamma and epsilon chains, while a peripheral stalk is formed by the delta, b and b' chains.

It is found in the cell inner membrane. Its function is as follows. F(1)F(0) ATP synthase produces ATP from ADP in the presence of a proton or sodium gradient. F-type ATPases consist of two structural domains, F(1) containing the extramembraneous catalytic core and F(0) containing the membrane proton channel, linked together by a central stalk and a peripheral stalk. During catalysis, ATP synthesis in the catalytic domain of F(1) is coupled via a rotary mechanism of the central stalk subunits to proton translocation. Key component of the F(0) channel; it plays a direct role in translocation across the membrane. A homomeric c-ring of between 10-14 subunits forms the central stalk rotor element with the F(1) delta and epsilon subunits. In Cereibacter sphaeroides (strain ATCC 17029 / ATH 2.4.9) (Rhodobacter sphaeroides), this protein is ATP synthase subunit c 2.